Consider the following 397-residue polypeptide: Arginine biosynthesis bifunctional protein ArgJ (397 aa).

Positions 147, 173, 184, 270, 392, and 397 each coordinate substrate. T184 acts as the Nucleophile in catalysis.

The protein belongs to the ArgJ family. As to quaternary structure, heterotetramer of two alpha and two beta chains.

The protein localises to the cytoplasm. The catalysed reaction is N(2)-acetyl-L-ornithine + L-glutamate = N-acetyl-L-glutamate + L-ornithine. It carries out the reaction L-glutamate + acetyl-CoA = N-acetyl-L-glutamate + CoA + H(+). It functions in the pathway amino-acid biosynthesis; L-arginine biosynthesis; L-ornithine and N-acetyl-L-glutamate from L-glutamate and N(2)-acetyl-L-ornithine (cyclic): step 1/1. It participates in amino-acid biosynthesis; L-arginine biosynthesis; N(2)-acetyl-L-ornithine from L-glutamate: step 1/4. In terms of biological role, catalyzes two activities which are involved in the cyclic version of arginine biosynthesis: the synthesis of N-acetylglutamate from glutamate and acetyl-CoA as the acetyl donor, and of ornithine by transacetylation between N(2)-acetylornithine and glutamate. The chain is Arginine biosynthesis bifunctional protein ArgJ from Streptococcus thermophilus (strain CNRZ 1066).